The primary structure comprises 157 residues: MSNIILDLQLACADLQGLPAEGDFLRWLEAVLPRFRDEAEVTIRLVDEAESHELNLTYRGKDRPTNVLSFPFEAPPGIELPLLGDMVICRQVVEREAQEQNISQLSHWAHMVVHGSLHLLGYDHISDEEAEEMESLEAEIMQVLGYPDPYAAEKESD.

The Zn(2+) site is built by H114, H118, and H124.

It belongs to the endoribonuclease YbeY family. Zn(2+) is required as a cofactor.

The protein localises to the cytoplasm. Single strand-specific metallo-endoribonuclease involved in late-stage 70S ribosome quality control and in maturation of the 3' terminus of the 16S rRNA. The protein is Endoribonuclease YbeY of Edwardsiella ictaluri (strain 93-146).